The chain runs to 288 residues: 2-hydroxy-6-oxononadienedioate/2-hydroxy-6-oxononatrienedioate hydrolase (288 aa).

The active-site Proton acceptor is the His267.

It belongs to the AB hydrolase superfamily. MhpC family. As to quaternary structure, homodimer.

The catalysed reaction is (2Z,4E)-2-hydroxy-6-oxonona-2,4-dienedioate + H2O = (2Z)-2-hydroxypenta-2,4-dienoate + succinate + H(+). The enzyme catalyses (2Z,4E,7E)-2-hydroxy-6-oxonona-2,4,7-trienedioate + H2O = (2Z)-2-hydroxypenta-2,4-dienoate + fumarate + H(+). It functions in the pathway aromatic compound metabolism; 3-phenylpropanoate degradation. Its function is as follows. Catalyzes the cleavage of the C5-C6 bond of 2-hydroxy-6-oxononadienedioate and 2-hydroxy-6-oxononatrienedioate, a dienol ring fission product of the bacterial meta-cleavage pathway for degradation of phenylpropionic acid. The chain is 2-hydroxy-6-oxononadienedioate/2-hydroxy-6-oxononatrienedioate hydrolase from Klebsiella pneumoniae subsp. pneumoniae (strain ATCC 700721 / MGH 78578).